We begin with the raw amino-acid sequence, 463 residues long: NADH dehydrogenase [ubiquinone] iron-sulfur protein 2, mitochondrial (463 aa).

The N-terminal 33 residues, 1–33, are a transit peptide targeting the mitochondrion; the sequence is MAALRALRCLRGVGAPVLRPGSGIRLPSQPSRG. Residue Lys62 is modified to N6-acetyllysine. The residue at position 118 (Arg118) is a Symmetric dimethylarginine. The [4Fe-4S] cluster site is built by Cys326, Cys332, and Cys347.

It belongs to the complex I 49 kDa subunit family. Core subunit of respiratory chain NADH dehydrogenase (Complex I) which is composed of 45 different subunits. Component of the iron-sulfur (IP) fragment of the enzyme. Interacts with NDUFAF3. Interacts with NDUFAF7. Interacts with CERS2. Requires [4Fe-4S] cluster as cofactor. Dimethylation at Arg-118 by NDUFAF7 takes place after NDUFS2 assembles into the complex I, leading to stabilize the early intermediate complex.

Its subcellular location is the mitochondrion inner membrane. The enzyme catalyses a ubiquinone + NADH + 5 H(+)(in) = a ubiquinol + NAD(+) + 4 H(+)(out). Its function is as follows. Core subunit of the mitochondrial membrane respiratory chain NADH dehydrogenase (Complex I) which catalyzes electron transfer from NADH through the respiratory chain, using ubiquinone as an electron acceptor. Essential for the catalytic activity and assembly of complex I. Redox-sensitive, critical component of the oxygen-sensing pathway in the pulmonary vasculature which plays a key role in acute pulmonary oxygen-sensing and hypoxic pulmonary vasoconstriction. Plays an important role in carotid body sensing of hypoxia. Essential for glia-like neural stem and progenitor cell proliferation, differentiation and subsequent oligodendrocyte or neuronal maturation. This chain is NADH dehydrogenase [ubiquinone] iron-sulfur protein 2, mitochondrial (Ndufs2), found in Mus musculus (Mouse).